A 335-amino-acid chain; its full sequence is Glycerol-3-phosphate dehydrogenase [NAD(P)+] (335 aa).

The NADPH site is built by Ser15, Tyr16, Arg36, and Lys110. Positions 110, 139, and 141 each coordinate sn-glycerol 3-phosphate. NADPH is bound at residue Ala143. 5 residues coordinate sn-glycerol 3-phosphate: Lys195, Asp248, Ser258, Arg259, and Asn260. Residue Lys195 is the Proton acceptor of the active site. Arg259 serves as a coordination point for NADPH. Residues Val283 and Glu285 each contribute to the NADPH site.

The protein belongs to the NAD-dependent glycerol-3-phosphate dehydrogenase family.

It localises to the cytoplasm. The enzyme catalyses sn-glycerol 3-phosphate + NAD(+) = dihydroxyacetone phosphate + NADH + H(+). The catalysed reaction is sn-glycerol 3-phosphate + NADP(+) = dihydroxyacetone phosphate + NADPH + H(+). Its pathway is membrane lipid metabolism; glycerophospholipid metabolism. Functionally, catalyzes the reduction of the glycolytic intermediate dihydroxyacetone phosphate (DHAP) to sn-glycerol 3-phosphate (G3P), the key precursor for phospholipid synthesis. This Pseudoalteromonas translucida (strain TAC 125) protein is Glycerol-3-phosphate dehydrogenase [NAD(P)+].